The primary structure comprises 600 residues: MVIPKEILSDFKELYEKANRLVEEESRNDPPTDPFRSHYKARDVLIVLKKQLDDQLVSVQASEEDGGQDDRCYHSLLAFVCRDLGRIYIYTEEQAEGEKMLNRCLELVTPFKECPEGIIPFIGAINELSIVLASKEEYNKGLEILLEAEKIYEDFKASGLKPLAIQDVFNPPEEGQQSHEAGPKELESLYTLVSFYMAQMYGHLGEPEKSAKCCHRTLHRQLESKTYDPIDFALNTATLSQFYIGEKRFEEARHHLAAATLIMAEYEVHMLEPEMSEKQRQDVSETFKHRYADVARCWAKYGLYLMNTSKLRLMRDEDDEDAKNLEIVLRNMRLVEAEQSRFPGLDLTACENRISCEYCLTFDDAKLVFHFVNEWLDIAKDYYKAENEATEYSKIMQDYAEAYEHIAFFEENPENQAKMQKRRAKYLEDLLDLLDPIFYMKICRECWYGAGTAHAAVMDVRLDIIRATSTPAPEDIKKVNQSCMKAIKHFESYVKSYLVKPPSEEWRPNMDVEEQRHMLYAHFHIGRIYYKLISGHPLQQLEHLTSCHTYYQRFDAGCQLHKEAAETLQGEIGVVREMLQLLPLKINTIKARLNKAGLTA.

Residues 384–434 (KAENEATEYSKIMQDYAEAYEHIAFFEENPENQAKMQKRRAKYLEDLLDLL) are a coiled coil.

This sequence belongs to the KIF-binding protein family.

It is found in the cytoplasm. The protein resides in the cytoskeleton. This Drosophila melanogaster (Fruit fly) protein is KIF-binding protein.